A 92-amino-acid chain; its full sequence is Small ribosomal subunit protein uS19 (92 aa).

This sequence belongs to the universal ribosomal protein uS19 family.

Its function is as follows. Protein S19 forms a complex with S13 that binds strongly to the 16S ribosomal RNA. In Vibrio atlanticus (strain LGP32) (Vibrio splendidus (strain Mel32)), this protein is Small ribosomal subunit protein uS19.